We begin with the raw amino-acid sequence, 179 residues long: Translation initiation factor IF-3 (179 aa).

This sequence belongs to the IF-3 family. As to quaternary structure, monomer.

Its subcellular location is the cytoplasm. Its function is as follows. IF-3 binds to the 30S ribosomal subunit and shifts the equilibrium between 70S ribosomes and their 50S and 30S subunits in favor of the free subunits, thus enhancing the availability of 30S subunits on which protein synthesis initiation begins. The protein is Translation initiation factor IF-3 of Zymomonas mobilis subsp. mobilis (strain ATCC 31821 / ZM4 / CP4).